The primary structure comprises 172 residues: Translationally-controlled tumor protein (172 aa).

The region spanning 1–172 is the TCTP domain; it reads MIIYRDLISH…FKDGLEMEKC (172 aa). Phosphoserine occurs at positions 46 and 53. A Phosphoserine; by PLK1 modification is found at Ser-64. Residues 70–172 form a required for reduction of TSC22D1 protein stability region; the sequence is VDIVMNHHLQ…FKDGLEMEKC (103 aa).

Belongs to the TCTP family. Homodimer. Interacts with STEAP3. Interacts with TSC22D1; interaction results in the destabilization of TSC22D1 protein.

The protein localises to the cytoplasm. In terms of biological role, involved in calcium binding and microtubule stabilization. Acts as a negative regulator of TSC22D1-mediated apoptosis, via interaction with and destabilization of TSC22D1 protein. This is Translationally-controlled tumor protein (Tpt1) from Mus musculus (Mouse).